The following is a 314-amino-acid chain: tRNA dimethylallyltransferase (314 aa).

6 to 13 contacts ATP; that stretch reads GPTAVGKT. 8-13 contacts substrate; the sequence is TAVGKT. The tract at residues 31–34 is interaction with substrate tRNA; it reads DSRQ.

Belongs to the IPP transferase family. As to quaternary structure, monomer. It depends on Mg(2+) as a cofactor.

It carries out the reaction adenosine(37) in tRNA + dimethylallyl diphosphate = N(6)-dimethylallyladenosine(37) in tRNA + diphosphate. Its function is as follows. Catalyzes the transfer of a dimethylallyl group onto the adenine at position 37 in tRNAs that read codons beginning with uridine, leading to the formation of N6-(dimethylallyl)adenosine (i(6)A). This is tRNA dimethylallyltransferase from Pseudothermotoga lettingae (strain ATCC BAA-301 / DSM 14385 / NBRC 107922 / TMO) (Thermotoga lettingae).